Reading from the N-terminus, the 431-residue chain is Divergent protein kinase domain 1B (431 aa).

The Cytoplasmic segment spans residues 1-30 (MRKLRRLVHMVLFCPISKGLQSRLPGIKVK). The May mediate ER retention motif lies at 5-6 (RR). A helical membrane pass occupies residues 31-51 (YLFLAWLSVFVGSWVVYMHYS). Residues 52–431 (SYSELCRGHV…WKKISNTKYS (380 aa)) are Lumenal-facing. 2 disulfides stabilise this stretch: C57/C94 and C62/C117.

This sequence belongs to the DIPK family. In terms of processing, among the many cysteines in the lumenal domain, most are probably involved in disulfide bonds.

It localises to the endoplasmic reticulum membrane. The sequence is that of Divergent protein kinase domain 1B (dipk1b) from Xenopus tropicalis (Western clawed frog).